The following is a 257-amino-acid chain: MEAKTQFELITIKSEDGFDENELSVLLKSDSDFHMNGFIWGHLAAKHVYSKLNSKLKSFEPKSRSEINEMIKAITAVTEFIEVHYYHEEEIAWKFLIEQQQCLSEPLLTIVKPQHTQWTEINNEMKDLVKSLTENQEIKDKSSNGWTESISKVKEILQKLTAMVYKSFYDEERIIIPVVLSSIPKSKQNKLGEKMNETMKNAPTSKFVLGAILDVCKTNKDLDENVKKAIPWAVRKVIFPLALEKNYNWFSEFVEIK.

This is an uncharacterized protein from Dictyostelium discoideum (Social amoeba).